The primary structure comprises 159 residues: UPF0262 protein TM1040_3562 (159 aa).

A disordered region spans residues 1 to 21 (MSRISQIELDDRNLPPPTPEI).

The protein belongs to the UPF0262 family.

The chain is UPF0262 protein TM1040_3562 from Ruegeria sp. (strain TM1040) (Silicibacter sp.).